A 104-amino-acid polypeptide reads, in one-letter code: Biogenesis of lysosome-related organelles complex 1 subunit BLS1 (104 aa).

It belongs to the BLOC1S1 family. As to quaternary structure, component of the biogenesis of lysosome-related organelles complex-1 (BLOC-1).

The protein resides in the endosome. Functionally, component of the biogenesis of lysosome-related organelles complex-1 (BLOC-1), a complex involved in endosomal cargo sorting. This is Biogenesis of lysosome-related organelles complex 1 subunit BLS1 (BLS1) from Kluyveromyces lactis (strain ATCC 8585 / CBS 2359 / DSM 70799 / NBRC 1267 / NRRL Y-1140 / WM37) (Yeast).